The following is a 367-amino-acid chain: Probable dual-specificity RNA methyltransferase RlmN (367 aa).

The active-site Proton acceptor is the E92. The 229-residue stretch at 98-326 folds into the Radical SAM core domain; the sequence is QEYGLSVCVT…YDTLKKNGIN (229 aa). C105 and C341 are oxidised to a cystine. Residues C112, C116, and C119 each coordinate [4Fe-4S] cluster. S-adenosyl-L-methionine is bound by residues 164-165, S196, 219-221, and N297; these read GE and SLH. The S-methylcysteine intermediate role is filled by C341.

This sequence belongs to the radical SAM superfamily. RlmN family. The cofactor is [4Fe-4S] cluster.

The protein resides in the cytoplasm. It catalyses the reaction adenosine(2503) in 23S rRNA + 2 reduced [2Fe-2S]-[ferredoxin] + 2 S-adenosyl-L-methionine = 2-methyladenosine(2503) in 23S rRNA + 5'-deoxyadenosine + L-methionine + 2 oxidized [2Fe-2S]-[ferredoxin] + S-adenosyl-L-homocysteine. It carries out the reaction adenosine(37) in tRNA + 2 reduced [2Fe-2S]-[ferredoxin] + 2 S-adenosyl-L-methionine = 2-methyladenosine(37) in tRNA + 5'-deoxyadenosine + L-methionine + 2 oxidized [2Fe-2S]-[ferredoxin] + S-adenosyl-L-homocysteine. Specifically methylates position 2 of adenine 2503 in 23S rRNA and position 2 of adenine 37 in tRNAs. This chain is Probable dual-specificity RNA methyltransferase RlmN, found in Listeria innocua serovar 6a (strain ATCC BAA-680 / CLIP 11262).